The primary structure comprises 511 residues: Ribose import ATP-binding protein RbsA (511 aa).

ABC transporter domains are found at residues 7-242 (LQIS…VGRE) and 256-500 (CSTT…SGTQ). Residue 39-46 (GENGAGKS) participates in ATP binding.

The protein belongs to the ABC transporter superfamily. Ribose importer (TC 3.A.1.2.1) family. As to quaternary structure, the complex is composed of an ATP-binding protein (RbsA), two transmembrane proteins (RbsC) and a solute-binding protein (RbsB).

It is found in the cell inner membrane. It catalyses the reaction D-ribose(out) + ATP + H2O = D-ribose(in) + ADP + phosphate + H(+). Functionally, part of the ABC transporter complex RbsABC involved in ribose import. Responsible for energy coupling to the transport system. The protein is Ribose import ATP-binding protein RbsA of Ruegeria sp. (strain TM1040) (Silicibacter sp.).